A 183-amino-acid polypeptide reads, in one-letter code: ATP-dependent protease subunit HslV (183 aa).

The active site involves T13. Na(+)-binding residues include G168, C171, and T174.

It belongs to the peptidase T1B family. HslV subfamily. As to quaternary structure, a double ring-shaped homohexamer of HslV is capped on each side by a ring-shaped HslU homohexamer. The assembly of the HslU/HslV complex is dependent on binding of ATP.

Its subcellular location is the cytoplasm. It catalyses the reaction ATP-dependent cleavage of peptide bonds with broad specificity.. With respect to regulation, allosterically activated by HslU binding. Protease subunit of a proteasome-like degradation complex believed to be a general protein degrading machinery. This is ATP-dependent protease subunit HslV from Xanthomonas euvesicatoria pv. vesicatoria (strain 85-10) (Xanthomonas campestris pv. vesicatoria).